Reading from the N-terminus, the 153-residue chain is ATP synthase subunit b' (153 aa).

A helical membrane pass occupies residues 23-40 (LMAIQVVALTYILNSLFF).

It belongs to the ATPase B chain family. In terms of assembly, F-type ATPases have 2 components, F(1) - the catalytic core - and F(0) - the membrane proton channel. F(1) has five subunits: alpha(3), beta(3), gamma(1), delta(1), epsilon(1). F(0) has four main subunits: a(1), b(1), b'(1) and c(10-14). The alpha and beta chains form an alternating ring which encloses part of the gamma chain. F(1) is attached to F(0) by a central stalk formed by the gamma and epsilon chains, while a peripheral stalk is formed by the delta, b and b' chains.

The protein resides in the cellular thylakoid membrane. Functionally, f(1)F(0) ATP synthase produces ATP from ADP in the presence of a proton or sodium gradient. F-type ATPases consist of two structural domains, F(1) containing the extramembraneous catalytic core and F(0) containing the membrane proton channel, linked together by a central stalk and a peripheral stalk. During catalysis, ATP synthesis in the catalytic domain of F(1) is coupled via a rotary mechanism of the central stalk subunits to proton translocation. Component of the F(0) channel, it forms part of the peripheral stalk, linking F(1) to F(0). The b'-subunit is a diverged and duplicated form of b found in plants and photosynthetic bacteria. The polypeptide is ATP synthase subunit b' (Prochlorococcus marinus (strain AS9601)).